The sequence spans 604 residues: Numb-like protein (604 aa).

Disordered stretches follow at residues 1–68 (MSRS…QWQA), 223–283 (GSFR…PVAA), 372–457 (ASAG…TLQP), and 531–604 (KAGA…EIEL). Residues 74–225 (RKGTCSFPVR…RTSFAREGSF (152 aa)) enclose the PID domain. A phosphoserine mark is found at Ser-224 and Ser-228. The span at 233-245 (PAEREAGDKKKAE) shows a compositional bias: basic and acidic residues. A compositionally biased stretch (low complexity) spans 246 to 260 (AAAAPAVAPGPAQPG). A Phosphoserine modification is found at Ser-263. Thr-279 carries the phosphothreonine modification. Residues 409 to 418 (TPSEAERWLE) are compositionally biased toward basic and acidic residues. Ser-411 is modified (phosphoserine). Composition is skewed to low complexity over residues 427–441 (QQQQ…QQQQ) and 542–552 (SAPGGQARPRP). Positions 553-568 (NGAPWPPEPAPAPAPE) are enriched in pro residues.

As to quaternary structure, interacts (via PTB domain) with MAP3K7IP2 (via C-terminal). Interacts (via C-terminal) with TRAF6 (via TRAF domains). Associates with EPS15 and NOTCH1. In terms of tissue distribution, preferentially expressed in the nervous system. In the developing neocortex, expressed in postmitotic neurons in the cortical plate but not in progenitors within the ventricular zone.

It is found in the cytoplasm. Functionally, plays a role in the process of neurogenesis. Required throughout embryonic neurogenesis to maintain neural progenitor cells, also called radial glial cells (RGCs), by allowing their daughter cells to choose progenitor over neuronal cell fate. Not required for the proliferation of neural progenitor cells before the onset of embryonic neurogenesis. Also required postnatally in the subventricular zone (SVZ) neurogenesis by regulating SVZ neuroblasts survival and ependymal wall integrity. Negative regulator of NF-kappa-B signaling pathway. The inhibition of NF-kappa-B activation is mediated at least in part, by preventing MAP3K7IP2 to interact with polyubiquitin chains of TRAF6 and RIPK1 and by stimulating the 'Lys-48'-linked polyubiquitination and degradation of TRAF6 in cortical neurons. This Mus musculus (Mouse) protein is Numb-like protein (Numbl).